The primary structure comprises 317 residues: 17-beta-hydroxysteroid dehydrogenase type 6 (317 aa).

A signal peptide spans 1-17; the sequence is MWFYLVTLVGLYYLLRW. 33 to 57 serves as a coordination point for NAD(+); it reads FITGCDSGFGNLLARQLDRRGMRVL. N-linked (GlcNAc...) asparagine glycosylation is present at asparagine 161. Serine 164 is a substrate binding site. Tyrosine 176 serves as the catalytic Proton acceptor.

This sequence belongs to the short-chain dehydrogenases/reductases (SDR) family. Detected in prostate, liver and kidney.

It localises to the microsome membrane. The protein localises to the endoplasmic reticulum membrane. It catalyses the reaction all-trans-retinol--[retinol-binding protein] + NAD(+) = all-trans-retinal--[retinol-binding protein] + NADH + H(+). The catalysed reaction is all-trans-retinol + NAD(+) = all-trans-retinal + NADH + H(+). It carries out the reaction androsterone + NAD(+) = 5alpha-androstan-3,17-dione + NADH + H(+). The enzyme catalyses testosterone + NAD(+) = androst-4-ene-3,17-dione + NADH + H(+). It catalyses the reaction 5alpha-androstane-3alpha,17beta-diol + NAD(+) = 17beta-hydroxy-5alpha-androstan-3-one + NADH + H(+). The catalysed reaction is 17beta-estradiol + NAD(+) = estrone + NADH + H(+). It carries out the reaction 17beta-estradiol + NADP(+) = estrone + NADPH + H(+). The enzyme catalyses 3alpha-hydroxy-5alpha-pregnan-20-one + NAD(+) = 5alpha-pregnane-3,20-dione + NADH + H(+). It catalyses the reaction 5alpha-androstane-3beta,17beta-diol + NAD(+) = 17beta-hydroxy-5alpha-androstan-3-one + NADH + H(+). The catalysed reaction is 3beta-hydroxy-5alpha-androstan-17-one + NAD(+) = 5alpha-androstan-3,17-dione + NADH + H(+). Its activity is regulated as follows. Competitively inhibited by 9-cis-retinoic acid and 13-cis-retinoic acid. Its function is as follows. NAD-dependent oxidoreductase with broad substrate specificity that shows both oxidative and reductive activity (in vitro). Has retinol dehydrogenase activity towards all-trans-retinol (in vitro). Has 17-beta-hydroxysteroid dehydrogenase activity towards various steroids (in vitro). Converts 5-alpha-androstan-3-alpha,17-beta-diol to androsterone and estradiol to estrone (in vitro). Has 3-alpha-hydroxysteroid dehydrogenase activity towards androsterone (in vitro). This chain is 17-beta-hydroxysteroid dehydrogenase type 6 (Hsd17b6), found in Rattus norvegicus (Rat).